The chain runs to 346 residues: 4-hydroxy-3-methylbut-2-enyl diphosphate reductase (346 aa).

Residue Cys19 coordinates [4Fe-4S] cluster. (2E)-4-hydroxy-3-methylbut-2-enyl diphosphate contacts are provided by His48 and His84. Dimethylallyl diphosphate-binding residues include His48 and His84. Isopentenyl diphosphate contacts are provided by His48 and His84. A [4Fe-4S] cluster-binding site is contributed by Cys106. His134 provides a ligand contact to (2E)-4-hydroxy-3-methylbut-2-enyl diphosphate. His134 contacts dimethylallyl diphosphate. Residue His134 coordinates isopentenyl diphosphate. The active-site Proton donor is Glu136. Position 175 (Thr175) interacts with (2E)-4-hydroxy-3-methylbut-2-enyl diphosphate. Cys205 contacts [4Fe-4S] cluster. Ser233, Ser234, Asn235, and Ser278 together coordinate (2E)-4-hydroxy-3-methylbut-2-enyl diphosphate. Residues Ser233, Ser234, Asn235, and Ser278 each contribute to the dimethylallyl diphosphate site. Isopentenyl diphosphate contacts are provided by Ser233, Ser234, Asn235, and Ser278.

The protein belongs to the IspH family. [4Fe-4S] cluster serves as cofactor.

The enzyme catalyses isopentenyl diphosphate + 2 oxidized [2Fe-2S]-[ferredoxin] + H2O = (2E)-4-hydroxy-3-methylbut-2-enyl diphosphate + 2 reduced [2Fe-2S]-[ferredoxin] + 2 H(+). It carries out the reaction dimethylallyl diphosphate + 2 oxidized [2Fe-2S]-[ferredoxin] + H2O = (2E)-4-hydroxy-3-methylbut-2-enyl diphosphate + 2 reduced [2Fe-2S]-[ferredoxin] + 2 H(+). It participates in isoprenoid biosynthesis; dimethylallyl diphosphate biosynthesis; dimethylallyl diphosphate from (2E)-4-hydroxy-3-methylbutenyl diphosphate: step 1/1. The protein operates within isoprenoid biosynthesis; isopentenyl diphosphate biosynthesis via DXP pathway; isopentenyl diphosphate from 1-deoxy-D-xylulose 5-phosphate: step 6/6. Functionally, catalyzes the conversion of 1-hydroxy-2-methyl-2-(E)-butenyl 4-diphosphate (HMBPP) into a mixture of isopentenyl diphosphate (IPP) and dimethylallyl diphosphate (DMAPP). Acts in the terminal step of the DOXP/MEP pathway for isoprenoid precursor biosynthesis. The sequence is that of 4-hydroxy-3-methylbut-2-enyl diphosphate reductase from Brucella suis biovar 1 (strain 1330).